We begin with the raw amino-acid sequence, 1423 residues long: Fructan beta-fructosidase (1423 aa).

The signal sequence occupies residues 1 to 39; it reads MEEETVCKNWFMRKSGKSWIFGCAVFFVLGLATALPVAA. Residues 44–161 are disordered; sequence QTTAADTAVT…TNLEDMSHDT (118 aa). Residues 69–126 are compositionally biased toward polar residues; the sequence is AVTETTQSEGTASKQLTTPAVADQTTEPTDNEPISSSDGASSPYQVTDTTEPQQTLTP. Residues 455–458, Gln474, 513–514, 581–582, and Asp783 contribute to the substrate site; these read WAND, FS, and RD. Asp458 is an active-site residue. The involved in binding of sugars with beta-(2,6) linkages or binding of molecular weight fructans stretch occupies residues 867-871; the sequence is ASVEV. Residues 924 to 1002 form the BIG2 domain; that stretch reads PVAMNTTTAK…SKENPSLSKT (79 aa). Over residues 1368 to 1385 the composition is skewed to polar residues; it reads DVNSVQQTEPSVMSSSPK. The segment at 1368-1394 is disordered; that stretch reads DVNSVQQTEPSVMSSSPKATLPDTGDH. Residues 1388-1392 carry the LPXTG sorting signal motif; it reads LPDTG. Thr1391 carries the pentaglycyl murein peptidoglycan amidated threonine modification. Residues 1392–1423 constitute a propeptide, removed by sortase; it reads GDHKTDLSQLGVLAMIGSFLVEIAGYFKKRKD.

This sequence belongs to the glycosyl hydrolase 32 family.

The protein localises to the secreted. It is found in the cell wall. The catalysed reaction is Hydrolysis of terminal, non-reducing (2-&gt;1)- and (2-&gt;6)-linked beta-D-fructofuranose residues in fructans.. Functionally, this protein is a fructanase enzyme which degrades levans and inulins to fructose and also cleaves sucrose into glucose and fructose and can therefore function as an extracellular invertase. In Streptococcus mutans serotype c (strain ATCC 700610 / UA159), this protein is Fructan beta-fructosidase (fruA).